A 613-amino-acid polypeptide reads, in one-letter code: Ribosome-associated molecular chaperone SSB (613 aa).

The interval 1 to 391 is nucleotide binding domain (NBD); sequence MADGVFQGAI…ILTGQSTSDE (391 aa). Residues 16–18, K73, 205–207, 271–278, and G342 contribute to the ATP site; these read TTY, GGT, and ERAKRTLS. Residues 392 to 402 form an inter-domain linker region; that stretch reads TKDLLLLDVAP. Residues 403 to 613 are substrate binding domain (SBD); the sequence is LSLGVGMQGD…RVVTKAMSSR (211 aa). The tract at residues 516–612 is lid domain (SBDalpha); it reads SEDIEKMVNQ…KRVVTKAMSS (97 aa). The Nuclear export signal motif lies at 574–582; sequence IEAALADAL.

It belongs to the heat shock protein 70 family. Ssb-type Hsp70 subfamily. In terms of assembly, binds to ribosomes. Binds close to the ribosomal tunnel exit via contacts with both ribosomal proteins and rRNA. Directly interacts with nascent polypeptides. This interaction is dependent on the ribosome-associated complex (RAC). Interacts with SSE1. Interacts with FES1.

The protein resides in the cytoplasm. It catalyses the reaction ATP + H2O = ADP + phosphate + H(+). In terms of biological role, ribosome-bound, Hsp70-type chaperone that assists in the cotranslational folding of newly synthesized proteins in the cytosol. Stimulates folding by interacting with nascent chains, binding to short, largely hydrophobic sequences exposed by unfolded proteins, thereby stabilizing longer, more slowly translated, and aggregation-prone nascent polypeptides and domains that cannot fold stably until fully synthesized. The Hsp70-protein substrate interaction depends on ATP-binding and on allosteric regulation between the NBD and the SBD. The ATP-bound state is characterized by a fast exchange rate of substrate (low affinity state), while in the ADP-bound state exchange is much slower (high affinity state). During the Hsp70 cycle, the chaperone switches between the ATP-bound state (open conformation) and the ADP-bound state (closed conformation) by major conformational rearrangements involving mainly the lid domain. Ssb cooperates with a specific Hsp40/Hsp70 co-chaperone termed the ribosome-associated complex (RAC), which stimulates the ATPase activity of the ribosome-associated pool of Ssbs and switches it to the high affinity substrate binding state. Hsp110 chaperone SSE1 and FES1 act as nucleotide exchange factors that cause substrate release. This Candida glabrata (strain ATCC 2001 / BCRC 20586 / JCM 3761 / NBRC 0622 / NRRL Y-65 / CBS 138) (Yeast) protein is Ribosome-associated molecular chaperone SSB (SSB1).